Here is a 1576-residue protein sequence, read N- to C-terminus: MDSSPDLSLKLRRGSSDSRDNFYMDFAQGIDSDIEEVDNTANNQEAGEVPPPPLPTVSLAEEVLLLVAPPPPPPSLLGQPLPTLTETDDIPPTPTPPPQQKDDEGDDEDEREEPVPEQDQGAPAAPSPPGSPINSVLELELIPPPPLSPMDDAGLRTDDDGEGEETDDAEEVAAIPPPHEMLDIESNPDEEEEEEEQEQASQEDTPKEEDEEEDDDKSTPPPPLPPLPSNFSYVQGHNLGQVTPPLTKSPSNSPSPPVTPPPCPELNISRMVSPPAQHISQIPPLTPSDESEGEAESQPNSPPLRLDAEQPPPDMDQPEPEDQPPEPENEPEPEPEPEPEPEPVSGAREDYSRSLDNEDESTTITTPPSNGYSASSIIAPPPEHFAELDEDRGFIPPPPLEQEPEEEVEEEEEEEEEELTKETDEISVDRESLQDQGGDSISSPRPASILTGSISTSVGGGAGGSPKPESRGPSRSGSQRSQLRSGSQQGSIAESRGGSRIGSRTGSVASAQAAGVLSPQASLKSQTSIRSQGQAGVRSPAGSIKSGSQRMQSPQAGEGAPAMPSPPLMRSPPPELARQMHSPPRITTPPRVCSPPLVSSPPKLAESAAAAVGVAATVKEQIGSSSSTAEPLEPSKPEPLKPPIATVSYQDEQKPSPPPTAAAAPAVTTTAATTAVTSQPRSHFTSSHHHYHLPHQFQHPHHQNHHTHSVRVPTPTVPSSYAPPPPPDSGSSSSPVDRRRLFMAGVAPPIAAGAGSLMAMPAEPAVAISPGRVSARSGSQHHVTIDESSLPSHKGNIQETPGPSGLIIGGGDGDGDRDIGGGGGPDSSDPPSSPGGSSSQPALSGSQADGQLALMYHSHQLTNYPVLPAIKRTHRPSFVYPPMPRVKAGDALATLFSALYGKLLVVMGIAFPMAEVISTYIPPSFYEVYYLYLYIGSMIFLLFMYATLIWGRPKLPVPIASPSKSATKASGTDSMDESDTDSNSVHHRLPPPIPVRRPSLLSPLGRRDAHYGSFYLRMGAVAFGIGSMIYSGLEFGQYFELNPDTKCHNVLLALTPATRMAFIFIQMYFIFLNNEQIKVYRYKIIARFGLMHMIGTNLAVWLNVLIQETKHEILTFYNPENRTLRISHRIPGHSRGHAIIQHDPTAHLRVPRGLKGPYQIFECRRTNIIGTLVQDASPFLFPCTIEYSLICAAILYVMWRSISRPQTPTPQRPDMISSPMKRSPHHYSVDCARAHKGLFVGILILVLTIISLIIFFVLISRPEFVAMAVTEVTICELLIYGTATIATLVGMIQIRHLQYDAYRSFSLDDILLVGAQTGSFLYNIFTVIAGHFTLRSDDMLVPINALASIVQTACQTMFILDASRRQAVSPEHLRKKPGREIVTFMLVVNLAMWAISTLEKSRAESHPIQLNFYGLWAWTIITHVSMPLAIFYRFHSTVCLCEIWKRAYKLKPTYMXEFARSRIQSIAQQQQFCEDLKTNLSYCYCSTTLAGGELETVEEVDSGESNSAEDAGAGAGSGGSRGSGGGAGAAEAGEAGEEGQQGGDSSCGLKAPIRALSPQSLNTEKAFCPVYVINGE.

Disordered stretches follow at residues 1 to 602 and 621 to 736; these read MDSS…SSPP and QIGS…SSPV. Composition is skewed to low complexity over residues 58–67 and 76–85; these read SLAEEVLLLV and LLGQPLPTLT. Acidic residues-rich tracts occupy residues 103 to 116, 159 to 171, 186 to 198, and 206 to 216; these read DEGDDEDEREEPVP, DDGEGEETDDAEE, SNPDEEEEEEEQE, and PKEEDEEEDDD. Residues 219 to 228 show a composition bias toward pro residues; sequence TPPPPLPPLP. Residues 229–241 are compositionally biased toward polar residues; sequence SNFSYVQGHNLGQ. Asn-230 carries N-linked (GlcNAc...) asparagine glycosylation. Positions 243 to 252 are enriched in low complexity; the sequence is TPPLTKSPSN. Residues 253-264 show a composition bias toward pro residues; that stretch reads SPSPPVTPPPCP. N-linked (GlcNAc...) asparagine glycosylation is present at Asn-267. Positions 316 to 341 are enriched in acidic residues; sequence DQPEPEDQPPEPENEPEPEPEPEPEP. The span at 347–356 shows a compositional bias: basic and acidic residues; sequence AREDYSRSLD. Positions 362–376 are enriched in polar residues; the sequence is TTITTPPSNGYSASS. A compositionally biased stretch (basic and acidic residues) spans 384 to 393; sequence HFAELDEDRG. Acidic residues predominate over residues 402 to 419; sequence QEPEEEVEEEEEEEEEEL. Over residues 420–433 the composition is skewed to basic and acidic residues; sequence TKETDEISVDRESL. Positions 434-457 are enriched in polar residues; sequence QDQGGDSISSPRPASILTGSISTS. Residues 465–507 show a composition bias toward low complexity; the sequence is SPKPESRGPSRSGSQRSQLRSGSQQGSIAESRGGSRIGSRTGS. 2 stretches are compositionally biased toward polar residues: residues 519–534 and 545–555; these read PQASLKSQTSIRSQGQ and KSGSQRMQSPQ. A compositionally biased stretch (pro residues) spans 563–575; sequence MPSPPLMRSPPPE. The span at 661-685 shows a compositional bias: low complexity; the sequence is AAAAPAVTTTAATTAVTSQPRSHFT. Residues 686-709 are compositionally biased toward basic residues; sequence SSHHHYHLPHQFQHPHHQNHHTHS. The chain crosses the membrane as a helical span at residues 741–761; sequence LFMAGVAPPIAAGAGSLMAMP. Residues 771–845 are disordered; the sequence is GRVSARSGSQ…GSSSQPALSG (75 aa). Residues 776 to 799 show a composition bias toward polar residues; it reads RSGSQHHVTIDESSLPSHKGNIQE. The span at 826 to 839 shows a compositional bias: low complexity; the sequence is DSSDPPSSPGGSSS. Helical transmembrane passes span 891–911 and 931–951; these read ALATLFSALYGKLLVVMGIAF and LYLYIGSMIFLLFMYATLIWG. The span at 962 to 973 shows a compositional bias: polar residues; that stretch reads PSKSATKASGTD. The interval 962 to 1001 is disordered; that stretch reads PSKSATKASGTDSMDESDTDSNSVHHRLPPPIPVRRPSLL. 3 helical membrane passes run 1019–1039, 1051–1071, and 1084–1104; these read GAVAFGIGSMIYSGLEFGQYF, LLALTPATRMAFIFIQMYFIF, and IIARFGLMHMIGTNLAVWLNV. Asn-1121 is a glycosylation site (N-linked (GlcNAc...) asparagine). Transmembrane regions (helical) follow at residues 1179–1199, 1239–1259, 1272–1292, 1310–1330, 1340–1360, 1381–1401, and 1412–1432; these read FLFPCTIEYSLICAAILYVMW, FVGILILVLTIISLIIFFVLI, VTICELLIYGTATIATLVGMI, ILLVGAQTGSFLYNIFTVIAG, LVPINALASIVQTACQTMFIL, IVTFMLVVNLAMWAISTLEKS, and FYGLWAWTIITHVSMPLAIFY. The N-linked (GlcNAc...) asparagine glycan is linked to Asn-1479. A disordered region spans residues 1498-1549; it reads EEVDSGESNSAEDAGAGAGSGGSRGSGGGAGAAEAGEAGEEGQQGGDSSCGL. Residues 1503-1512 show a composition bias toward low complexity; that stretch reads GESNSAEDAG. Residues 1513 to 1528 show a composition bias toward gly residues; it reads AGAGSGGSRGSGGGAG.

The protein belongs to the otopetrin family.

It is found in the cell membrane. Its function is as follows. Proton-selective channel that specifically transports protons into cells. Proton-selective channel activity is probably required in cell types that use changes in intracellular pH for cell signaling or to regulate biochemical or developmental processes. This is Proton channel OtopLc from Drosophila melanogaster (Fruit fly).